The chain runs to 441 residues: Arginine biosynthesis bifunctional protein ArgJ, mitochondrial (441 aa).

Residues Thr-177, Lys-203, Thr-214, Glu-303, Asn-436, and Ser-441 each contribute to the substrate site. Residue Thr-214 is the Nucleophile of the active site.

It belongs to the ArgJ family. Heterodimer of an alpha and a beta chain. Post-translationally, the alpha and beta chains are autoproteolytically processed from a single precursor protein within the mitochondrion.

Its subcellular location is the mitochondrion matrix. It catalyses the reaction N(2)-acetyl-L-ornithine + L-glutamate = N-acetyl-L-glutamate + L-ornithine. It carries out the reaction L-glutamate + acetyl-CoA = N-acetyl-L-glutamate + CoA + H(+). It functions in the pathway amino-acid biosynthesis; L-arginine biosynthesis; L-ornithine and N-acetyl-L-glutamate from L-glutamate and N(2)-acetyl-L-ornithine (cyclic): step 1/1. Its pathway is amino-acid biosynthesis; L-arginine biosynthesis; N(2)-acetyl-L-ornithine from L-glutamate: step 1/4. Its function is as follows. Catalyzes two activities which are involved in the cyclic version of arginine biosynthesis: the synthesis of acetylglutamate from glutamate and acetyl-CoA, and of ornithine by transacetylation between acetylornithine and glutamate. The chain is Arginine biosynthesis bifunctional protein ArgJ, mitochondrial from Debaryomyces hansenii (strain ATCC 36239 / CBS 767 / BCRC 21394 / JCM 1990 / NBRC 0083 / IGC 2968) (Yeast).